Reading from the N-terminus, the 426-residue chain is Trigger factor 1 (426 aa).

The PPIase FKBP-type domain maps to 163 to 248 (QDTVNIDFAG…VNKLKRKEYA (86 aa)).

Belongs to the FKBP-type PPIase family. Tig subfamily.

The protein resides in the cytoplasm. The catalysed reaction is [protein]-peptidylproline (omega=180) = [protein]-peptidylproline (omega=0). In terms of biological role, involved in protein export. Acts as a chaperone by maintaining the newly synthesized protein in an open conformation. Functions as a peptidyl-prolyl cis-trans isomerase. The chain is Trigger factor 1 from Desulfitobacterium hafniense (strain Y51).